Reading from the N-terminus, the 382-residue chain is Sphingosine 1-phosphate receptor 1 (382 aa).

Position 2 is an N-acetylvaline (V2). At 2–46 (VSTSIPEVKALRSSVSDYGNYDIIVRHYNYTGKLNIGAEKDHGIK) the chain is on the extracellular side. K10 is modified (N6-acetyllysine). N-linked (GlcNAc...) asparagine glycosylation occurs at N30. A helical membrane pass occupies residues 47–68 (LTSVVFILICCFIILENIFVLL). At 69–82 (TIWKTKKFHRPMYY) the chain is on the cytoplasmic side. A helical membrane pass occupies residues 83 to 104 (FIGNLALSDLLAGVAYTANLLL). Topologically, residues 105-116 (SGATTYKLTPAQ) are extracellular. Residues 117–138 (WFLREGSMFVALSASVFSLLAI) traverse the membrane as a helical segment. 120–121 (RE) is a binding site for sphing-4-enine 1-phosphate. Topologically, residues 139 to 160 (AIERYITMLKMKLHNGSNSSRS) are cytoplasmic. The helical transmembrane segment at 161-182 (FLLISACWVISLILGGLPIMGW) threads the bilayer. At 183–196 (NCISSLSSCSTVLP) the chain is on the extracellular side. C184 and C191 are disulfide-bonded. The chain crosses the membrane as a helical span at residues 197 to 224 (LYHKHYILFCTTVFTLLLLSIVILYCRI). Residues 225–257 (YSLVRTRSRRLTFRKNISKASRSSEKSLALLKT) lie on the Cytoplasmic side of the membrane. T236 carries the post-translational modification Phosphothreonine. The chain crosses the membrane as a helical span at residues 258–278 (VIIVLSVFIACWAPLFILLLL). 265–269 (FIACW) lines the sphing-4-enine 1-phosphate pocket. Over 279 to 289 (DVGCKAKTCDI) the chain is Extracellular. Cysteines 282 and 287 form a disulfide. The helical transmembrane segment at 290–310 (LYKAEYFLVLAVLNSGTNPII) threads the bilayer. Over 311–382 (YTLTNKEMRR…MSSGNVNSSS (72 aa)) the chain is Cytoplasmic. Residue C328 is the site of S-palmitoyl cysteine attachment. The disordered stretch occupies residues 348 to 382 (MEFSRSKSDNSSHPQKDDGDNPETIMSSGNVNSSS). Phosphoserine occurs at positions 351 and 353. Residues 351-366 (SRSKSDNSSHPQKDDG) show a composition bias toward basic and acidic residues. The span at 371-382 (TIMSSGNVNSSS) shows a compositional bias: polar residues.

Belongs to the G-protein coupled receptor 1 family. In terms of assembly, interacts with GNAI1 and GNAI3. Interacts with CD69; this interaction promotes S1PR1 degradation. Palmitoylated by ZDHHC5. Palmitoylation is required for targeting to plasma membrane, enabling G(i) coupling. In terms of tissue distribution, expressed in a wide variety of tissues with highest levels in brain, heart and spleen. Lower levels found in kidney, liver, lung, muscle, placenta, thymus, and uterus. Very low levels in intestine, stomach and testis. According to PubMed:9931453, expressed modestly in apparent endothelial cells surrounding some blood vessels (e.g. aortic trunk).

The protein resides in the cell membrane. Its subcellular location is the endosome. It is found in the membrane raft. In terms of biological role, G-protein coupled receptor for the bioactive lysosphingolipid sphingosine 1-phosphate (S1P) that seems to be coupled to the G(i) subclass of heteromeric G proteins. Signaling leads to the activation of RAC1, SRC, PTK2/FAK1 and MAP kinases. Plays an important role in cell migration, probably via its role in the reorganization of the actin cytoskeleton and the formation of lamellipodia in response to stimuli that increase the activity of the sphingosine kinase SPHK1. Required for normal chemotaxis toward sphingosine 1-phosphate. Required for normal embryonic heart development and normal cardiac morphogenesis. Plays an important role in the regulation of sprouting angiogenesis and vascular maturation. Inhibits sprouting angiogenesis to prevent excessive sprouting during blood vessel development. Required for normal egress of mature T-cells from the thymus into the blood stream and into peripheral lymphoid organs. Plays a role in the migration of osteoclast precursor cells, the regulation of bone mineralization and bone homeostasis. Plays a role in responses to oxidized 1-palmitoyl-2-arachidonoyl-sn-glycero-3-phosphocholine by pulmonary endothelial cells and in the protection against ventilator-induced lung injury. This Mus musculus (Mouse) protein is Sphingosine 1-phosphate receptor 1.